A 747-amino-acid chain; its full sequence is Protein neuralized (747 aa).

Residues 97-251 (PLQFHTVHGD…NCTGIEFLDA (155 aa)) enclose the NHR 1 domain. Over residues 280-292 (LPQQQQQLPQQQL) the composition is skewed to low complexity. The disordered stretch occupies residues 280–309 (LPQQQQQLPQQQLTAHHPLQQSRRSLPGGT). The NHR 2 domain maps to 359–514 (PVPFHITKGR…STQSLRMFRQ (156 aa)). The segment at 694–735 (CTICYENPIDSVLYMCGHMCMCYDCAIEQWRGVGGGQCPLCR) adopts an RING-type zinc-finger fold.

Its subcellular location is the nucleus. Functionally, involved in neurogenesis. Interacts with other neurogenic proteins in the specification of the neuroblast versus epidermoblast cell fate. This Drosophila virilis (Fruit fly) protein is Protein neuralized (neur).